We begin with the raw amino-acid sequence, 409 residues long: NADH-quinone oxidoreductase subunit D (409 aa).

It belongs to the complex I 49 kDa subunit family. NDH-1 is composed of 14 different subunits. Subunits NuoB, C, D, E, F, and G constitute the peripheral sector of the complex.

It is found in the cell inner membrane. The enzyme catalyses a quinone + NADH + 5 H(+)(in) = a quinol + NAD(+) + 4 H(+)(out). NDH-1 shuttles electrons from NADH, via FMN and iron-sulfur (Fe-S) centers, to quinones in the respiratory chain. The immediate electron acceptor for the enzyme in this species is believed to be ubiquinone. Couples the redox reaction to proton translocation (for every two electrons transferred, four hydrogen ions are translocated across the cytoplasmic membrane), and thus conserves the redox energy in a proton gradient. The polypeptide is NADH-quinone oxidoreductase subunit D (Campylobacter concisus (strain 13826)).